We begin with the raw amino-acid sequence, 444 residues long: Presenilin sel-12 (444 aa).

Over 1–45 (MPSTRRQQEGGGADAETHTVYGTNLITNRNSQEDENVVEEAELKY) the chain is Cytoplasmic. The helical transmembrane segment at 46–66 (GASHVIHLFVPVSLCMALVVF) threads the bilayer. The Lumenal segment spans residues 67 to 101 (TMNTITFYSQNNGRHLLYTPFVRETDSIVEKGLMS). Residues 102–122 (LGNALVMLCVVVLMTVLLIVF) form a helical membrane-spanning segment. Over 123-130 (YKYKFYKL) the chain is Cytoplasmic. Residues 131–151 (IHGWLIVSSFLLLFLFTTIYV) traverse the membrane as a helical segment. Residues 152–163 (QEVLKSFDVSPS) lie on the Lumenal side of the membrane. A helical membrane pass occupies residues 164–184 (ALLVLFGLGNYGVLGMMCIHW). The Cytoplasmic portion of the chain corresponds to 185–189 (KGPLR). A helical membrane pass occupies residues 190 to 210 (LQQFYLITMSALMALVFIKYL). Over 211 to 212 (PE) the chain is Lumenal. The chain crosses the membrane as a helical span at residues 213–233 (WTVWFVLFVISVWDLVAVLTP). Aspartate 226 is an active-site residue. At 234–359 (KGPLRYLVET…RHEEEERGVK (126 aa)) the chain is on the cytoplasmic side. A disordered region spans residues 275-331 (TDPREPTSSDSNTSTAFPGEASCSSETPKRPKVKRIPQKVQIESNTTASTTQNSGVR). 2 stretches are compositionally biased toward polar residues: residues 282–300 (SSDS…CSSE) and 315–329 (QIES…QNSG). Residues 360-380 (LGLGDFIFYSVLLGKASSYFD) traverse the membrane as a helical segment. The active site involves aspartate 364. Topologically, residues 381-384 (WNTT) are lumenal. A helical transmembrane segment spans residues 385-405 (IACYVAILIGLCFTLVLLAVF). The Cytoplasmic portion of the chain corresponds to 406–413 (KRALPALP). The PAL motif lies at 410-412 (PAL). An intramembrane region (helical) is located at residues 414-434 (ISIFSGLIFYFCTRWIITPFV). Over 435-444 (TQVSQKCLLY) the chain is Cytoplasmic.

This sequence belongs to the peptidase A22A family. As to quaternary structure, homodimer. Component of the gamma-secretase complex, a complex probably composed of the presenilin homodimer (sel-12, hop-1 or spe-4), nicastrin (aph-2), aph-1 and pen-2. Interacts with sel-10. Expressed in most neurons.

It localises to the endoplasmic reticulum membrane. It is found in the golgi apparatus membrane. Functionally, probable catalytic subunit of the gamma-secretase complex, an endoprotease complex that catalyzes the intramembrane cleavage of integral membrane proteins such as Notch receptors (lin-12 or glp-1). Provides the major presenilin function compared to hop-1 and spe-4. Required cell-autonomously for correct neurite connectivity of the AIY cholinergic interneurons and their correct functioning in thermotaxis. Required for mesodermal patterning of muscle function. Promotes basement membrane gap formation during tissue remodeling. The sequence is that of Presenilin sel-12 from Caenorhabditis elegans.